The chain runs to 100 residues: Small ribosomal subunit protein uS14 (100 aa).

This sequence belongs to the universal ribosomal protein uS14 family. As to quaternary structure, part of the 30S ribosomal subunit. Contacts proteins S3 and S10.

Binds 16S rRNA, required for the assembly of 30S particles and may also be responsible for determining the conformation of the 16S rRNA at the A site. The protein is Small ribosomal subunit protein uS14 of Trichodesmium erythraeum (strain IMS101).